The sequence spans 90 residues: Probable Fe(2+)-trafficking protein (90 aa).

The protein belongs to the Fe(2+)-trafficking protein family.

Functionally, could be a mediator in iron transactions between iron acquisition and iron-requiring processes, such as synthesis and/or repair of Fe-S clusters in biosynthetic enzymes. The polypeptide is Probable Fe(2+)-trafficking protein (Ectopseudomonas mendocina (strain ymp) (Pseudomonas mendocina)).